We begin with the raw amino-acid sequence, 275 residues long: Membrane protein insertase MisCB (275 aa).

The first 18 residues, 1-18 (MLKTYQKLLAMGIFLIVL), serve as a signal peptide directing secretion. Residue Cys19 is the site of N-palmitoyl cysteine attachment. A lipid anchor (S-diacylglycerol cysteine) is attached at Cys19. The next 5 membrane-spanning stretches (helical) occupy residues 63-83 (YGLS…PLFV), 139-159 (AMGC…YYAI), 172-192 (WFSL…MYFV), 219-239 (LMVF…PAAL), and 240-260 (PLYW…LQMT).

The protein belongs to the OXA1/ALB3/YidC family. Type 2 subfamily. Mostly monomeric, it may also form dimers. Interacts with SpoIIIAE. Forms a complex with the F(1)F(0) ATP synthase in which can be found the alpha, beta, gamma, delta and epsilon subunits of F(1) and a, b and subunits of F(0). YqgA is found in the same complex.

Its subcellular location is the cell membrane. Functionally, required for the insertion and/or proper folding and/or complex formation of integral membrane proteins into the membrane. Involved in integration of membrane proteins that insert both dependently and independently of the Sec translocase complex, as well as at least some lipoproteins. Also involved in protein secretion processes. It has an overlapping, although partly distinct, function compared to SpoIIIJ(MisCB). This chain is Membrane protein insertase MisCB (misCB), found in Bacillus subtilis (strain 168).